The following is a 169-amino-acid chain: NADH-quinone oxidoreductase subunit B (169 aa).

[4Fe-4S] cluster contacts are provided by Cys42, Cys43, Cys107, and Cys136.

This sequence belongs to the complex I 20 kDa subunit family. In terms of assembly, NDH-1 is composed of 14 different subunits. Subunits NuoB, C, D, E, F, and G constitute the peripheral sector of the complex. Requires [4Fe-4S] cluster as cofactor.

It is found in the cell inner membrane. The catalysed reaction is a quinone + NADH + 5 H(+)(in) = a quinol + NAD(+) + 4 H(+)(out). Functionally, NDH-1 shuttles electrons from NADH, via FMN and iron-sulfur (Fe-S) centers, to quinones in the respiratory chain. The immediate electron acceptor for the enzyme in this species is believed to be ubiquinone. Couples the redox reaction to proton translocation (for every two electrons transferred, four hydrogen ions are translocated across the cytoplasmic membrane), and thus conserves the redox energy in a proton gradient. The protein is NADH-quinone oxidoreductase subunit B of Wolinella succinogenes (strain ATCC 29543 / DSM 1740 / CCUG 13145 / JCM 31913 / LMG 7466 / NCTC 11488 / FDC 602W) (Vibrio succinogenes).